We begin with the raw amino-acid sequence, 105 residues long: Heat shock protein HspQ (105 aa).

The protein belongs to the HspQ family.

The protein resides in the cytoplasm. In terms of biological role, involved in the degradation of certain denaturated proteins, including DnaA, during heat shock stress. This is Heat shock protein HspQ from Klebsiella pneumoniae (strain 342).